Here is a 291-residue protein sequence, read N- to C-terminus: Gamma-soluble NSF attachment protein (291 aa).

It belongs to the SNAP family.

Its subcellular location is the membrane. Its function is as follows. Required for vesicular transport between the endoplasmic reticulum and the Golgi apparatus. Binds to SNARE complex and then recruits NSF to disassemble it. The protein is Gamma-soluble NSF attachment protein (GSNAP) of Arabidopsis thaliana (Mouse-ear cress).